The following is a 225-amino-acid chain: Urease accessory protein UreF (225 aa).

The protein belongs to the UreF family. UreD, UreF and UreG form a complex that acts as a GTP-hydrolysis-dependent molecular chaperone, activating the urease apoprotein by helping to assemble the nickel containing metallocenter of UreC. The UreE protein probably delivers the nickel.

The protein localises to the cytoplasm. Functionally, required for maturation of urease via the functional incorporation of the urease nickel metallocenter. The chain is Urease accessory protein UreF from Arthrobacter sp. (strain FB24).